Here is a 236-residue protein sequence, read N- to C-terminus: Leucyl/phenylalanyl-tRNA--protein transferase (236 aa).

Belongs to the L/F-transferase family.

The protein localises to the cytoplasm. It catalyses the reaction N-terminal L-lysyl-[protein] + L-leucyl-tRNA(Leu) = N-terminal L-leucyl-L-lysyl-[protein] + tRNA(Leu) + H(+). The enzyme catalyses N-terminal L-arginyl-[protein] + L-leucyl-tRNA(Leu) = N-terminal L-leucyl-L-arginyl-[protein] + tRNA(Leu) + H(+). The catalysed reaction is L-phenylalanyl-tRNA(Phe) + an N-terminal L-alpha-aminoacyl-[protein] = an N-terminal L-phenylalanyl-L-alpha-aminoacyl-[protein] + tRNA(Phe). Its function is as follows. Functions in the N-end rule pathway of protein degradation where it conjugates Leu, Phe and, less efficiently, Met from aminoacyl-tRNAs to the N-termini of proteins containing an N-terminal arginine or lysine. In Vibrio parahaemolyticus serotype O3:K6 (strain RIMD 2210633), this protein is Leucyl/phenylalanyl-tRNA--protein transferase.